The chain runs to 523 residues: 2-isopropylmalate synthase (523 aa).

Positions 5-267 constitute a Pyruvate carboxyltransferase domain; sequence VIIFDTTLRD…HTAINHQEIW (263 aa). D14, H202, H204, and N238 together coordinate Mn(2+). The tract at residues 392 to 523 is regulatory domain; it reads RLDYFSVQSG…QHNENNKETV (132 aa).

The protein belongs to the alpha-IPM synthase/homocitrate synthase family. LeuA type 1 subfamily. Homodimer. Requires Mn(2+) as cofactor.

It is found in the cytoplasm. The enzyme catalyses 3-methyl-2-oxobutanoate + acetyl-CoA + H2O = (2S)-2-isopropylmalate + CoA + H(+). It functions in the pathway amino-acid biosynthesis; L-leucine biosynthesis; L-leucine from 3-methyl-2-oxobutanoate: step 1/4. Its function is as follows. Catalyzes the condensation of the acetyl group of acetyl-CoA with 3-methyl-2-oxobutanoate (2-ketoisovalerate) to form 3-carboxy-3-hydroxy-4-methylpentanoate (2-isopropylmalate). In Shigella flexneri serotype 5b (strain 8401), this protein is 2-isopropylmalate synthase.